Consider the following 177-residue polypeptide: Ecotin (177 aa).

Residues 1 to 23 form the signal peptide; sequence MQASIQNRIFFGLVVLWSTTVLE. Residues Cys-83 and Cys-122 are joined by a disulfide bond.

Belongs to the protease inhibitor I11 (ecotin) family. As to quaternary structure, homodimer.

It is found in the periplasm. Its function is as follows. General inhibitor of family S1 serine proteases. The sequence is that of Ecotin from Prochlorococcus marinus (strain MIT 9313).